The chain runs to 346 residues: Holliday junction branch migration complex subunit RuvB (346 aa).

Residues 4–185 are large ATPase domain (RuvB-L); sequence SDRIITASPF…FGIVSRLEFY (182 aa). ATP is bound by residues leucine 24, arginine 25, glycine 66, lysine 69, threonine 70, threonine 71, 132-134, arginine 175, tyrosine 185, and arginine 222; that span reads EDY. Threonine 70 is a Mg(2+) binding site. The small ATPAse domain (RuvB-S) stretch occupies residues 186-256; that stretch reads TSDELSKIVT…VADAALQMLD (71 aa). The tract at residues 259–346 is head domain (RuvB-H); that stretch reads AAGLDVLDRK…AATPGLFNPD (88 aa). Positions 295, 314, and 319 each coordinate DNA.

Belongs to the RuvB family. Homohexamer. Forms an RuvA(8)-RuvB(12)-Holliday junction (HJ) complex. HJ DNA is sandwiched between 2 RuvA tetramers; dsDNA enters through RuvA and exits via RuvB. An RuvB hexamer assembles on each DNA strand where it exits the tetramer. Each RuvB hexamer is contacted by two RuvA subunits (via domain III) on 2 adjacent RuvB subunits; this complex drives branch migration. In the full resolvosome a probable DNA-RuvA(4)-RuvB(12)-RuvC(2) complex forms which resolves the HJ.

Its subcellular location is the cytoplasm. It catalyses the reaction ATP + H2O = ADP + phosphate + H(+). The RuvA-RuvB-RuvC complex processes Holliday junction (HJ) DNA during genetic recombination and DNA repair, while the RuvA-RuvB complex plays an important role in the rescue of blocked DNA replication forks via replication fork reversal (RFR). RuvA specifically binds to HJ cruciform DNA, conferring on it an open structure. The RuvB hexamer acts as an ATP-dependent pump, pulling dsDNA into and through the RuvAB complex. RuvB forms 2 homohexamers on either side of HJ DNA bound by 1 or 2 RuvA tetramers; 4 subunits per hexamer contact DNA at a time. Coordinated motions by a converter formed by DNA-disengaged RuvB subunits stimulates ATP hydrolysis and nucleotide exchange. Immobilization of the converter enables RuvB to convert the ATP-contained energy into a lever motion, pulling 2 nucleotides of DNA out of the RuvA tetramer per ATP hydrolyzed, thus driving DNA branch migration. The RuvB motors rotate together with the DNA substrate, which together with the progressing nucleotide cycle form the mechanistic basis for DNA recombination by continuous HJ branch migration. Branch migration allows RuvC to scan DNA until it finds its consensus sequence, where it cleaves and resolves cruciform DNA. The chain is Holliday junction branch migration complex subunit RuvB from Nitrosomonas eutropha (strain DSM 101675 / C91 / Nm57).